The primary structure comprises 297 residues: B-lymphocyte antigen CD20 (297 aa).

Residues 1–56 lie on the Cytoplasmic side of the membrane; sequence MTTPRNSVNGTFPAEPMKGPIAMQSGPKPLFRRMSSLVGPTQSFFMRESKTLGAVQ. S36 is modified (phosphoserine). Residues 57–78 form a helical membrane-spanning segment; the sequence is IMNGLFHIALGGLLMIPAGIYA. The epitope 1 stretch occupies residues 74-80; it reads AGIYAPI. The Extracellular segment spans residues 79–84; the sequence is PICVTV. The chain crosses the membrane as a helical span at residues 85–105; that stretch reads WYPLWGGIMYIISGSLLAATE. Residues 106–120 are Cytoplasmic-facing; it reads KNSRKCLVKGKMIMN. Residue C111 is the site of S-palmitoyl cysteine attachment. A helical membrane pass occupies residues 121-141; it reads SLSLFAAISGMILSIMDILNI. Topologically, residues 142–188 are extracellular; it reads KISHFLKMESLNFIRAHTPYINIYNCEPANPSEKNSPSTQYCYSIQS. The interval 146-160 is epitope 2; it reads FLKMESLNFIRAHTP. A disulfide bridge links C167 with C183. The segment at 168–175 is epitope 3 (recognized by antibodies, including Rituximab); that stretch reads EPANPSEK. The chain crosses the membrane as a helical span at residues 189–209; sequence LFLGILSVMLIFAFFQELVIA. Topologically, residues 210–297 are cytoplasmic; the sequence is GIVENEWKRT…SSPIENDSSP (88 aa). C220 is lipidated: S-palmitoyl cysteine. Position 225 is a phosphoserine (S225). T239 bears the Phosphothreonine mark. The segment at 247–297 is disordered; that stretch reads VGLTETSSQPKNEEDIEIIPIQEEEEEETETNFPEPPQDQESSPIENDSSP. Acidic residues predominate over residues 260–276; it reads EDIEIIPIQEEEEEETE. The segment covering 285 to 297 has biased composition (polar residues); the sequence is DQESSPIENDSSP.

It belongs to the MS4A family. In terms of assembly, forms homotetramers. Interacts with the heavy and light chains of cell surface IgM, the antigen-binding components of the BCR. Phosphorylated on serines and threonines in resting B-cells. Protein kinase C/PKC can use CD20 as substrate. Expressed on B-cells.

The protein resides in the cell membrane. Its function is as follows. B-lymphocyte-specific membrane protein that plays a role in the regulation of cellular calcium influx necessary for the development, differentiation, and activation of B-lymphocytes. Functions as a store-operated calcium (SOC) channel component promoting calcium influx after activation by the B-cell receptor/BCR. This Homo sapiens (Human) protein is B-lymphocyte antigen CD20 (MS4A1).